The primary structure comprises 101 residues: Trp operon repressor homolog (101 aa).

Residues 59 to 82 (QREIQQNLNTSAATITRGSNMIKT) mediate DNA binding.

It belongs to the TrpR family. As to quaternary structure, homodimer.

It is found in the cytoplasm. In terms of biological role, this protein is an aporepressor. When complexed with L-tryptophan it binds the operator region of the trp operon and prevents the initiation of transcription. The chain is Trp operon repressor homolog from Haemophilus influenzae (strain 86-028NP).